The following is a 396-amino-acid chain: Bifunctional enzyme Fae/Hps (396 aa).

Residues 1–161 form a formaldehyde-activating enzyme region; sequence MYQIGEALIG…YEKDRGVHAI (161 aa). Catalysis depends on His-17, which acts as the Proton donor. Residues Asp-19, Leu-48, Lys-66, Thr-68, and Gln-83 each coordinate substrate. The 3-hexulose-6-phosphate synthase stretch occupies residues 162 to 396; that stretch reads MGYKITRLWD…IDQYRIMTDF (235 aa).

This sequence in the N-terminal section; belongs to the formaldehyde-activating enzyme family. It in the C-terminal section; belongs to the HPS/KGPDC family. HPS subfamily.

The enzyme catalyses 5,6,7,8-tetrahydromethanopterin + formaldehyde = 5,10-methylenetetrahydromethanopterin + H2O. The catalysed reaction is D-ribulose 5-phosphate + formaldehyde = D-arabino-hex-3-ulose 6-phosphate. It functions in the pathway carbohydrate biosynthesis; D-ribose 5-phosphate biosynthesis. Catalyzes the condensation of formaldehyde with tetrahydromethanopterin (H(4)MPT) to 5,10-methylenetetrahydromethanopterin. Functionally, catalyzes the reversible formation of ribulose-5-phosphate and formaldehyde from 3-hexulose-6-phosphate. The sequence is that of Bifunctional enzyme Fae/Hps from Methanocella arvoryzae (strain DSM 22066 / NBRC 105507 / MRE50).